Consider the following 80-residue polypeptide: Large ribosomal subunit protein bL31B (80 aa).

Belongs to the bacterial ribosomal protein bL31 family. Type B subfamily. In terms of assembly, part of the 50S ribosomal subunit.

In Stenotrophomonas maltophilia (strain K279a), this protein is Large ribosomal subunit protein bL31B.